The primary structure comprises 471 residues: Thiohydroximate-O-sulfate sulfur/sulfate-lyase (nitrile-forming) NSP2 (471 aa).

The Jacalin-type lectin domain occupies 2-144 (VQKVEARGGE…LHSLGAYISS (143 aa)). Kelch repeat units follow at residues 178-226 (KIFS…VRMV), 231-277 (SLYV…SMTA), 281-330 (NVYV…VVQG), 332-379 (VWVV…VVGK), 381-435 (ILVF…GWSA), and 446-471 (GLVM…VDSA). Arg238 functions as the Proton donor in the catalytic mechanism. Positions 238, 271, 293, 322, and 371 each coordinate a (Z)-N-(sulfonatooxy)alkanimidothioate. The active-site Proton donor is Arg293. Residues Glu387, Asp391, and His395 each coordinate Fe(2+). Trp433 is an a (Z)-N-(sulfonatooxy)alkanimidothioate binding site.

The protein belongs to the jacalin lectin family. It depends on Fe(2+) as a cofactor. As to expression, expressed only in seeds.

The enzyme catalyses a (Z)-N-(sulfonatooxy)alkanimidothioate = a nitrile + sulfur + sulfate. The catalysed reaction is (Z)-phenyl-N-(sulfonatooxy)methanimidothioate = phenylacetonitrile + sulfur + sulfate. It carries out the reaction (Z)-N-(sulfonatooxy)prop-2-enimidothioate = but-3-enenitrile + sulfur + sulfate. It catalyses the reaction (Z)-(indol-3-yl)-N-(sulfonatooxy)methanimidothioate = (indol-3-yl)acetonitrile + sulfur + sulfate. With respect to regulation, the presence of Fe(2+) supports lyase activity in a dose-dependent manner with both benzylglucosinolate and 2-propenylglucosinolate as substrates. More active at pH 7.4 than at pH 6. Specifier protein responsible for constitutive and herbivore-induced simple nitrile formation, especially in seeds. Promotes simple nitriles, but not epithionitrile or thiocyanate formation. Converts allylglucosinolate (allyl-GSL), 2-propenylglucosinolate (sinigrin), indol-3-ylmethylglucosinolate (glucobrassicin), benzylisothiocyanate and benzylglucosinolate (glucotropaeolin) to their corresponding simple nitriles in the presence of myrosinase. Catalyzes mainly the conversion of benzylisothiocyanate when benzylglucosinolate is used as the initial substrate of myrosinase. Involved in the regulation of glucosinolate content in seeds, during stratification and germination. This Arabidopsis thaliana (Mouse-ear cress) protein is Thiohydroximate-O-sulfate sulfur/sulfate-lyase (nitrile-forming) NSP2.